The sequence spans 508 residues: Ribonuclease Y (508 aa).

Residues 1-21 (MMLWYIVAGAGGLLIGYLIAN) traverse the membrane as a helical segment. The 86-residue stretch at 198-283 (TVSTVSLPSD…EMYEKAKQEV (86 aa)) folds into the KH domain. An HD domain is found at 324 to 417 (VLNHSIEVAL…VAAADALSAA (94 aa)).

This sequence belongs to the RNase Y family.

It localises to the cell membrane. Functionally, endoribonuclease that initiates mRNA decay. This is Ribonuclease Y from Thermotoga maritima (strain ATCC 43589 / DSM 3109 / JCM 10099 / NBRC 100826 / MSB8).